Here is a 362-residue protein sequence, read N- to C-terminus: Sulfate/thiosulfate import ATP-binding protein CysA (362 aa).

Residues 13-243 (ITVRDAYKRY…PTNAFVMSFL (231 aa)) form the ABC transporter domain. 45-52 (GPSGSGKS) is a binding site for ATP.

Belongs to the ABC transporter superfamily. Sulfate/tungstate importer (TC 3.A.1.6) family. As to quaternary structure, the complex is composed of two ATP-binding proteins (CysA), two transmembrane proteins (CysT and CysW) and a solute-binding protein (CysP).

It localises to the cell membrane. It catalyses the reaction sulfate(out) + ATP + H2O = sulfate(in) + ADP + phosphate + H(+). It carries out the reaction thiosulfate(out) + ATP + H2O = thiosulfate(in) + ADP + phosphate + H(+). Functionally, part of the ABC transporter complex CysAWTP involved in sulfate/thiosulfate import. Responsible for energy coupling to the transport system. This Mycolicibacterium paratuberculosis (strain ATCC BAA-968 / K-10) (Mycobacterium paratuberculosis) protein is Sulfate/thiosulfate import ATP-binding protein CysA.